The chain runs to 217 residues: Adenylate kinase (217 aa).

10 to 15 (GAGKGT) is an ATP binding site. The tract at residues 30-59 (STGDMFRAAMKEGTPLGLQAKQYMDRGDLV) is NMP. AMP contacts are provided by residues Thr-31, Arg-36, 57-59 (DLV), 85-88 (GFPR), and Gln-92. An LID region spans residues 126-163 (GRRICRNCGATYHLIFHPPAKPGVCDKCGGELYQRADD). Arg-127 contributes to the ATP binding site. 2 residues coordinate Zn(2+): Cys-130 and Cys-133. Position 136–137 (136–137 (TY)) interacts with ATP. The Zn(2+) site is built by Cys-150 and Cys-153. Positions 160 and 171 each coordinate AMP. Gln-199 lines the ATP pocket.

Belongs to the adenylate kinase family. Monomer.

It is found in the cytoplasm. The catalysed reaction is AMP + ATP = 2 ADP. It functions in the pathway purine metabolism; AMP biosynthesis via salvage pathway; AMP from ADP: step 1/1. Catalyzes the reversible transfer of the terminal phosphate group between ATP and AMP. Plays an important role in cellular energy homeostasis and in adenine nucleotide metabolism. This Geobacillus stearothermophilus (Bacillus stearothermophilus) protein is Adenylate kinase.